Here is a 392-residue protein sequence, read N- to C-terminus: Outer membrane protein assembly factor BamB (392 aa).

The first 19 residues, 1–19, serve as a signal peptide directing secretion; it reads MQLRKLLLPGLLSVTLLSG. Cysteine 20 carries the N-palmitoyl cysteine lipid modification. The S-diacylglycerol cysteine moiety is linked to residue cysteine 20.

This sequence belongs to the BamB family. As to quaternary structure, part of the Bam complex, which is composed of the outer membrane protein BamA, and four lipoproteins BamB, BamC, BamD and BamE.

The protein resides in the cell outer membrane. Functionally, part of the outer membrane protein assembly complex, which is involved in assembly and insertion of beta-barrel proteins into the outer membrane. In Salmonella typhimurium (strain LT2 / SGSC1412 / ATCC 700720), this protein is Outer membrane protein assembly factor BamB.